The primary structure comprises 517 residues: Glutamyl-tRNA(Gln) amidotransferase subunit A, mitochondrial (517 aa).

Catalysis depends on charge relay system residues K58 and S131. Positions 106–132 are disordered; it reads FGMGTHSTHSAHGPVASPAGRSAGGSS. The active-site Acyl-ester intermediate is S155.

Belongs to the amidase family. GatA subfamily. Subunit of the heterotrimeric GatCAB amidotransferase (AdT) complex, composed of A, B and C subunits.

The protein resides in the mitochondrion. It carries out the reaction L-glutamyl-tRNA(Gln) + L-glutamine + ATP + H2O = L-glutaminyl-tRNA(Gln) + L-glutamate + ADP + phosphate + H(+). In terms of biological role, allows the formation of correctly charged Gln-tRNA(Gln) through the transamidation of misacylated Glu-tRNA(Gln) in the mitochondria. The reaction takes place in the presence of glutamine and ATP through an activated gamma-phospho-Glu-tRNA(Gln). The sequence is that of Glutamyl-tRNA(Gln) amidotransferase subunit A, mitochondrial from Pyricularia oryzae (strain 70-15 / ATCC MYA-4617 / FGSC 8958) (Rice blast fungus).